We begin with the raw amino-acid sequence, 233 residues long: Tetrahydromethanopterin S-methyltransferase subunit D (233 aa).

Helical transmembrane passes span leucine 4–valine 24, valine 39–alanine 59, leucine 67–valine 87, phenylalanine 133–alanine 153, methionine 166–isoleucine 186, and glycine 209–tyrosine 229.

Belongs to the MtrD family. The complex is composed of 8 subunits; MtrA, MtrB, MtrC, MtrD, MtrE, MtrF, MtrG and MtrH.

It localises to the cell membrane. The catalysed reaction is 5-methyl-5,6,7,8-tetrahydromethanopterin + coenzyme M + 2 Na(+)(in) = 5,6,7,8-tetrahydromethanopterin + methyl-coenzyme M + 2 Na(+)(out). The protein operates within one-carbon metabolism; methanogenesis from CO(2); methyl-coenzyme M from 5,10-methylene-5,6,7,8-tetrahydromethanopterin: step 2/2. Its function is as follows. Part of a complex that catalyzes the formation of methyl-coenzyme M and tetrahydromethanopterin from coenzyme M and methyl-tetrahydromethanopterin. This is an energy-conserving, sodium-ion translocating step. This chain is Tetrahydromethanopterin S-methyltransferase subunit D, found in Methanothermobacter marburgensis (strain ATCC BAA-927 / DSM 2133 / JCM 14651 / NBRC 100331 / OCM 82 / Marburg) (Methanobacterium thermoautotrophicum).